The chain runs to 306 residues: Pantothenate kinase (306 aa).

Position 91-98 (91-98 (GSVAVGKS)) interacts with ATP.

The protein belongs to the prokaryotic pantothenate kinase family.

It localises to the cytoplasm. It catalyses the reaction (R)-pantothenate + ATP = (R)-4'-phosphopantothenate + ADP + H(+). The protein operates within cofactor biosynthesis; coenzyme A biosynthesis; CoA from (R)-pantothenate: step 1/5. This Streptococcus thermophilus (strain CNRZ 1066) protein is Pantothenate kinase.